We begin with the raw amino-acid sequence, 493 residues long: MIQAKTHVFWFVTGSQHLYGEEAVQEVEEHSKMICNGLNDGDLRFQVEYKAVATSLDGVRKLFEEANRDEECAGIITWMHTFSPAKMWIPGLSELNKPLLHFHTQFNRDIPWDKIDMDFMNINQSAHGDREYGFIGARLGIPRKVIAGYWEDREVKRSIDKWMSAAVAYIESRHIKVARFGDNMRNVAVTEGDKIEAQIQLGWSVDGYGIGDLVTEINAVSEQSLSELISEYEELYEWPEGEAARESVKEQARIELGLKRFLSSGGYTAFTTTFEDLHGMKQLPGLAVQRLMAEGYGFGGEGDWKTAALVRMMKMMAGGKETSFMEDYTYHFEPGNEMILGSHMLEVCPSIAEHKPRIEVHPLSMGAKDDPARLVFDGIAGPAVNVSLIDLGGRFRLVINKVEAVKVPHDMPNLPVARVLWKPQPSLRTSAEAWILAGGAHHTCLSYQLTAEQMLDWAEMSGIEAVLINRDTTILNLRNELKWSEAAYRLRKF.

Mn(2+) contacts are provided by glutamate 301, glutamate 326, histidine 343, and histidine 442.

It belongs to the arabinose isomerase family. Mn(2+) is required as a cofactor.

It carries out the reaction beta-L-arabinopyranose = L-ribulose. The protein operates within carbohydrate degradation; L-arabinose degradation via L-ribulose; D-xylulose 5-phosphate from L-arabinose (bacterial route): step 1/3. Functionally, catalyzes the conversion of L-arabinose to L-ribulose. In Bacillus licheniformis (strain ATCC 14580 / DSM 13 / JCM 2505 / CCUG 7422 / NBRC 12200 / NCIMB 9375 / NCTC 10341 / NRRL NRS-1264 / Gibson 46), this protein is L-arabinose isomerase 1.